The sequence spans 338 residues: uncharacterized protein (338 aa).

This is an uncharacterized protein from Acidianus filamentous virus 2 (isolate Italy/Pozzuoli) (AFV-2).